We begin with the raw amino-acid sequence, 268 residues long: Zinc import ATP-binding protein ZnuC (268 aa).

The ABC transporter domain occupies 16–231 (IQLKNINVVF…PTFMRLWGNQ (216 aa)). 48–55 (GPNGGGKS) contacts ATP.

It belongs to the ABC transporter superfamily. Zinc importer (TC 3.A.1.15.5) family. As to quaternary structure, the complex is composed of two ATP-binding proteins (ZnuC), two transmembrane proteins (ZnuB) and a solute-binding protein (ZnuA).

It localises to the cell inner membrane. It carries out the reaction Zn(2+)(out) + ATP(in) + H2O(in) = Zn(2+)(in) + ADP(in) + phosphate(in) + H(+)(in). Functionally, part of the ABC transporter complex ZnuABC involved in zinc import. Responsible for energy coupling to the transport system. In Haemophilus influenzae (strain ATCC 51907 / DSM 11121 / KW20 / Rd), this protein is Zinc import ATP-binding protein ZnuC.